We begin with the raw amino-acid sequence, 324 residues long: GTPase Era (324 aa).

Residues lysine 31–histidine 199 enclose the Era-type G domain. Residues glycine 39 to serine 46 form a G1 region. Glycine 39–serine 46 lines the GTP pocket. Residues glutamine 65–asparagine 69 form a G2 region. The segment at aspartate 86–glycine 89 is G3. GTP contacts are provided by residues aspartate 86 to isoleucine 90 and asparagine 148 to aspartate 151. Residues asparagine 148–aspartate 151 form a G4 region. A G5 region spans residues phenylalanine 178–alanine 180. A KH type-2 domain is found at threonine 230–proline 306.

The protein belongs to the TRAFAC class TrmE-Era-EngA-EngB-Septin-like GTPase superfamily. Era GTPase family. In terms of assembly, monomer.

Its subcellular location is the cytoplasm. It localises to the cell inner membrane. Functionally, an essential GTPase that binds both GDP and GTP, with rapid nucleotide exchange. Plays a role in 16S rRNA processing and 30S ribosomal subunit biogenesis and possibly also in cell cycle regulation and energy metabolism. In Nostoc sp. (strain PCC 7120 / SAG 25.82 / UTEX 2576), this protein is GTPase Era.